We begin with the raw amino-acid sequence, 345 residues long: N-acetyl-gamma-glutamyl-phosphate reductase (345 aa).

Residue cysteine 142 is part of the active site.

Belongs to the NAGSA dehydrogenase family. Type 1 subfamily.

The protein resides in the cytoplasm. The enzyme catalyses N-acetyl-L-glutamate 5-semialdehyde + phosphate + NADP(+) = N-acetyl-L-glutamyl 5-phosphate + NADPH + H(+). It participates in amino-acid biosynthesis; L-arginine biosynthesis; N(2)-acetyl-L-ornithine from L-glutamate: step 3/4. Catalyzes the NADPH-dependent reduction of N-acetyl-5-glutamyl phosphate to yield N-acetyl-L-glutamate 5-semialdehyde. The chain is N-acetyl-gamma-glutamyl-phosphate reductase from Thermus thermophilus (strain ATCC BAA-163 / DSM 7039 / HB27).